We begin with the raw amino-acid sequence, 735 residues long: 1,4-alpha-glucan branching enzyme GlgB 1 (735 aa).

Asp418 acts as the Nucleophile in catalysis. Glu471 acts as the Proton donor in catalysis.

This sequence belongs to the glycosyl hydrolase 13 family. GlgB subfamily. Monomer.

It carries out the reaction Transfers a segment of a (1-&gt;4)-alpha-D-glucan chain to a primary hydroxy group in a similar glucan chain.. The protein operates within glycan biosynthesis; glycogen biosynthesis. Catalyzes the formation of the alpha-1,6-glucosidic linkages in glycogen by scission of a 1,4-alpha-linked oligosaccharide from growing alpha-1,4-glucan chains and the subsequent attachment of the oligosaccharide to the alpha-1,6 position. The protein is 1,4-alpha-glucan branching enzyme GlgB 1 of Rhizobium johnstonii (strain DSM 114642 / LMG 32736 / 3841) (Rhizobium leguminosarum bv. viciae).